The chain runs to 125 residues: Ribosome-binding factor A (125 aa).

It belongs to the RbfA family. In terms of assembly, monomer. Binds 30S ribosomal subunits, but not 50S ribosomal subunits or 70S ribosomes.

Its subcellular location is the cytoplasm. Its function is as follows. One of several proteins that assist in the late maturation steps of the functional core of the 30S ribosomal subunit. Associates with free 30S ribosomal subunits (but not with 30S subunits that are part of 70S ribosomes or polysomes). Required for efficient processing of 16S rRNA. May interact with the 5'-terminal helix region of 16S rRNA. This Xylella fastidiosa (strain M23) protein is Ribosome-binding factor A.